Here is a 450-residue protein sequence, read N- to C-terminus: Cyclin-A2-3 (450 aa).

Disordered stretches follow at residues 18–53 (ALRA…NKRK) and 75–94 (NSKQ…SQLA). Over residues 23–34 (EVTSTTQNQQRV) the composition is skewed to polar residues.

This sequence belongs to the cyclin family. Cyclin AB subfamily. In terms of assembly, interacts with CDKA-1. Interacts with SAMBA.

It is found in the nucleus. In terms of biological role, negatively regulates endocycles and acts as a regulator of ploidy levels in endoreduplication. Promotes divisions in the guard cells (GCs) after the guard mother cells (GMC) symmetric division. In Arabidopsis thaliana (Mouse-ear cress), this protein is Cyclin-A2-3 (CYCA2-3).